The sequence spans 171 residues: 3-hydroxydecanoyl-[acyl-carrier-protein] dehydratase (171 aa).

The active site involves H70.

Belongs to the thioester dehydratase family. FabA subfamily. As to quaternary structure, homodimer.

It localises to the cytoplasm. The catalysed reaction is a (3R)-hydroxyacyl-[ACP] = a (2E)-enoyl-[ACP] + H2O. It carries out the reaction (3R)-hydroxydecanoyl-[ACP] = (2E)-decenoyl-[ACP] + H2O. It catalyses the reaction (2E)-decenoyl-[ACP] = (3Z)-decenoyl-[ACP]. The protein operates within lipid metabolism; fatty acid biosynthesis. Necessary for the introduction of cis unsaturation into fatty acids. Catalyzes the dehydration of (3R)-3-hydroxydecanoyl-ACP to E-(2)-decenoyl-ACP and then its isomerization to Z-(3)-decenoyl-ACP. Can catalyze the dehydratase reaction for beta-hydroxyacyl-ACPs with saturated chain lengths up to 16:0, being most active on intermediate chain length. This chain is 3-hydroxydecanoyl-[acyl-carrier-protein] dehydratase, found in Pseudomonas putida (strain GB-1).